We begin with the raw amino-acid sequence, 347 residues long: MITLTERQSLILKAIVRDYTEGGNPVGSKSLVQELPIKVSSATIRNEMARLEDLGLIVKTHLSSGRIPSIKGYRYYVDHILKPEKVDGKDLKVIQHSLGGEFHKIDEIVAQSADILSQLTSYTTFTLRPELKDSRLSGFRLVPLGNHQVMAILVTNNGDVENQTFTIPSDITGDELEPVVRFIDDQLVGLPLQDVLRQLTHEIPLKLAQYLQDPDGFLDIFGSVLSKAASERFYVGGKLNLFNYTDQQSPKELQSLYSLLDQTDRLANVIGPPGQRIQVRIGNEITNDLLKNYSLITATYDVDQHGQGVIALLGPTAMPYSRMIGLMGAFQRELARKLLDYYRYFDE.

This sequence belongs to the HrcA family.

In terms of biological role, negative regulator of class I heat shock genes (grpE-dnaK-dnaJ and groELS operons). Prevents heat-shock induction of these operons. The chain is Heat-inducible transcription repressor HrcA from Lactiplantibacillus plantarum (strain ATCC BAA-793 / NCIMB 8826 / WCFS1) (Lactobacillus plantarum).